Consider the following 151-residue polypeptide: uncharacterized protein (151 aa).

Residues 35–147 (GIFENERQKL…RETLQESLED (113 aa)) adopt a coiled-coil conformation.

This is an uncharacterized protein from Helicobacter hepaticus (strain ATCC 51449 / 3B1).